The sequence spans 628 residues: 1,4-alpha-glucan branching enzyme GlgB (628 aa).

Residue Asp304 is the Nucleophile of the active site. Glu355 (proton donor) is an active-site residue.

The protein belongs to the glycosyl hydrolase 13 family. GlgB subfamily. As to quaternary structure, monomer.

It carries out the reaction Transfers a segment of a (1-&gt;4)-alpha-D-glucan chain to a primary hydroxy group in a similar glucan chain.. Its pathway is glycan biosynthesis; glycogen biosynthesis. In terms of biological role, catalyzes the formation of the alpha-1,6-glucosidic linkages in glycogen by scission of a 1,4-alpha-linked oligosaccharide from growing alpha-1,4-glucan chains and the subsequent attachment of the oligosaccharide to the alpha-1,6 position. The polypeptide is 1,4-alpha-glucan branching enzyme GlgB (Streptococcus mutans serotype c (strain ATCC 700610 / UA159)).